The primary structure comprises 84 residues: Sulfur carrier protein TusA (84 aa).

The active-site Cysteine persulfide intermediate is the Cys21.

It belongs to the sulfur carrier protein TusA family.

It is found in the cytoplasm. Its function is as follows. Sulfur carrier protein which probably makes part of a sulfur-relay system. This is Sulfur carrier protein TusA from Pseudomonas savastanoi pv. phaseolicola (strain 1448A / Race 6) (Pseudomonas syringae pv. phaseolicola (strain 1448A / Race 6)).